A 401-amino-acid polypeptide reads, in one-letter code: MVRINEHYIEISNSYLFAEIAERVNEYKQNNKNREVISLGIGDVTQAIAPAVVEAIHKATNEMACTKTLRGYAPYEGYDFLIQAILKNDFTDKGISIEADEIFVNDGAKSDTGNIGDILGQDNHIAITDPAYPVYVDTNRMAGRTIELLPCTPENYFVPNFPRKTADVIYLCYPNNPTGIALNAAQLKNWVDYALTNKSLILFDAAYEAYISQQDVPHSIYEISDAKKVAIEFRSFSKTAGFTGLRAGYTIVPKELIIQTSKGKMLSLNAMWRRRQSTKFNGTAYIVQRGAEAVYSIEGQKQIRKAIDYYRGNALTIKEGLESLGVTTYGGINAPYIWVKTPNNLTSWEFFDLLLNKIQVIGTPGDGFGQAGKGFFRFTAFGNKEDTLEAVLRMKKLLEFH.

Tyr-15 and Gly-42 together coordinate substrate. Pyridoxal 5'-phosphate-binding positions include Tyr-72, 108–109 (AK), Tyr-132, Asn-176, Tyr-207, and 235–237 (SFS). Residues Lys-109, Tyr-132, and Asn-176 each contribute to the substrate site. The residue at position 238 (Lys-238) is an N6-(pyridoxal phosphate)lysine. 2 residues coordinate pyridoxal 5'-phosphate: Arg-246 and Asn-281. Residues Asn-281 and Arg-377 each contribute to the substrate site.

This sequence belongs to the class-I pyridoxal-phosphate-dependent aminotransferase family. LL-diaminopimelate aminotransferase subfamily. In terms of assembly, homodimer. Pyridoxal 5'-phosphate is required as a cofactor.

The catalysed reaction is (2S,6S)-2,6-diaminopimelate + 2-oxoglutarate = (S)-2,3,4,5-tetrahydrodipicolinate + L-glutamate + H2O + H(+). Its pathway is amino-acid biosynthesis; L-lysine biosynthesis via DAP pathway; LL-2,6-diaminopimelate from (S)-tetrahydrodipicolinate (aminotransferase route): step 1/1. In terms of biological role, involved in the synthesis of meso-diaminopimelate (m-DAP or DL-DAP), required for both lysine and peptidoglycan biosynthesis. Catalyzes the direct conversion of tetrahydrodipicolinate to LL-diaminopimelate. In Azobacteroides pseudotrichonymphae genomovar. CFP2, this protein is LL-diaminopimelate aminotransferase.